The primary structure comprises 478 residues: tRNA (guanine(10)-N(2))-methyltransferase TRMT11 (478 aa).

Residues 457 to 478 (EERARSEMANAENVKSKGKEDV) form a disordered region.

This sequence belongs to the class I-like SAM-binding methyltransferase superfamily. TRM11 methyltransferase family. In terms of assembly, part of the heterodimeric TRMT11-TRM112 methyltransferase complex; this complex forms an active tRNA methyltransferase, where TRMT112 acts as an activator of the catalytic subunit TRMT11.

The protein localises to the cytoplasm. The enzyme catalyses guanosine(10) in tRNA + S-adenosyl-L-methionine = N(2)-methylguanosine(10) in tRNA + S-adenosyl-L-homocysteine + H(+). Its function is as follows. Catalytic subunit of the TRMT11-TRM112 methyltransferase complex, that specifically mediates the S-adenosyl-L-methionine-dependent N(2)-methylation of guanosine nucleotide at position 10 (m2G10) in tRNAs. This is one of the major tRNA (guanine-N(2))-methyltransferases. In Xenopus laevis (African clawed frog), this protein is tRNA (guanine(10)-N(2))-methyltransferase TRMT11 (trmt11.L).